The primary structure comprises 423 residues: UPF0229 protein Pput_0430 (423 aa).

Residues 81–108 form a disordered region; sequence EFTAGEHIPRPQGGGGGGGRGKAGNSGE. Residues 92-107 show a composition bias toward gly residues; that stretch reads QGGGGGGGRGKAGNSG.

This sequence belongs to the UPF0229 family.

The protein is UPF0229 protein Pput_0430 of Pseudomonas putida (strain ATCC 700007 / DSM 6899 / JCM 31910 / BCRC 17059 / LMG 24140 / F1).